The following is a 285-amino-acid chain: Bifunctional protein FolD (285 aa).

NADP(+) contacts are provided by residues 165-167 and Ser-190; that span reads GRS.

The protein belongs to the tetrahydrofolate dehydrogenase/cyclohydrolase family. Homodimer.

The catalysed reaction is (6R)-5,10-methylene-5,6,7,8-tetrahydrofolate + NADP(+) = (6R)-5,10-methenyltetrahydrofolate + NADPH. It catalyses the reaction (6R)-5,10-methenyltetrahydrofolate + H2O = (6R)-10-formyltetrahydrofolate + H(+). It functions in the pathway one-carbon metabolism; tetrahydrofolate interconversion. In terms of biological role, catalyzes the oxidation of 5,10-methylenetetrahydrofolate to 5,10-methenyltetrahydrofolate and then the hydrolysis of 5,10-methenyltetrahydrofolate to 10-formyltetrahydrofolate. The sequence is that of Bifunctional protein FolD from Burkholderia cenocepacia (strain HI2424).